Consider the following 315-residue polypeptide: 2-oxoglutarate and iron-dependent oxygenase domain-containing protein 3 (315 aa).

Residues 1–32 are disordered; it reads MAPQRRGPPRVPEGNSAAERRHANSTKKDRLP. Residues 1–41 are Cytoplasmic-facing; sequence MAPQRRGPPRVPEGNSAAERRHANSTKKDRLPQEAQRTWLR. Positions 18–32 are enriched in basic and acidic residues; that stretch reads AERRHANSTKKDRLP. The chain crosses the membrane as a helical; Signal-anchor for type II membrane protein span at residues 42–62; that stretch reads IVALGVSLALVTFLLWSSAGI. Residues 63–315 are Lumenal-facing; the sequence is DDDVAEVVAH…DHGIEDPVLT (253 aa). Residues 203 to 305 form the Fe2OG dioxygenase domain; sequence KPTFFSRINS…AITIAFTCNP (103 aa). Asn-211 is a glycosylation site (N-linked (GlcNAc...) asparagine). 2 residues coordinate Fe cation: His-226 and Asp-228. An N-linked (GlcNAc...) asparagine glycan is attached at Asn-263. Fe cation is bound at residue His-284. Residue Arg-294 is part of the active site. Position 294 (Arg-294) interacts with 2-oxoglutarate.

It belongs to the OGFOD3 family. Fe(2+) serves as cofactor. It depends on L-ascorbate as a cofactor.

The protein localises to the membrane. The protein is 2-oxoglutarate and iron-dependent oxygenase domain-containing protein 3 (Ogfod3) of Rattus norvegicus (Rat).